The following is a 588-amino-acid chain: ustiloxin B cluster transcription factor ustR (588 aa).

Residues 11-38 (CWTCRLRRKKCNEDGQPCSNCEARGVFC) constitute a DNA-binding region (zn(2)-C6 fungal-type). The segment at 68 to 92 (RTRRARATPTNSINGEPRRPSIDMN) is disordered.

The protein resides in the nucleus. Its function is as follows. Transcription factor that regulates the expression of the gene cluster that mediates the biosynthesis of ustiloxin B, an antimitotic tetrapeptide. This is ustiloxin B cluster transcription factor ustR from Aspergillus flavus (strain ATCC 200026 / FGSC A1120 / IAM 13836 / NRRL 3357 / JCM 12722 / SRRC 167).